Consider the following 485-residue polypeptide: Proline--tRNA ligase (485 aa).

It belongs to the class-II aminoacyl-tRNA synthetase family. ProS type 3 subfamily. In terms of assembly, homodimer.

It localises to the cytoplasm. It catalyses the reaction tRNA(Pro) + L-proline + ATP = L-prolyl-tRNA(Pro) + AMP + diphosphate. Its function is as follows. Catalyzes the attachment of proline to tRNA(Pro) in a two-step reaction: proline is first activated by ATP to form Pro-AMP and then transferred to the acceptor end of tRNA(Pro). This Aeropyrum pernix (strain ATCC 700893 / DSM 11879 / JCM 9820 / NBRC 100138 / K1) protein is Proline--tRNA ligase.